The chain runs to 451 residues: Phosphoglucosamine mutase (451 aa).

Ser103 acts as the Phosphoserine intermediate in catalysis. Residues Ser103, Asp243, Asp245, and Asp247 each coordinate Mg(2+). At Ser103 the chain carries Phosphoserine.

It belongs to the phosphohexose mutase family. It depends on Mg(2+) as a cofactor. In terms of processing, activated by phosphorylation.

It catalyses the reaction alpha-D-glucosamine 1-phosphate = D-glucosamine 6-phosphate. Its function is as follows. Catalyzes the conversion of glucosamine-6-phosphate to glucosamine-1-phosphate. In Lactiplantibacillus plantarum (strain ATCC BAA-793 / NCIMB 8826 / WCFS1) (Lactobacillus plantarum), this protein is Phosphoglucosamine mutase.